A 2948-amino-acid chain; its full sequence is Transforming acidic coiled-coil-containing protein 2 (2948 aa).

The span at 1–30 (MGNENSTSDNQRTLSAQTPRSAQPPGNSQN) shows a compositional bias: polar residues. 15 disordered regions span residues 1-304 (MGNE…TDDL), 314-333 (RSNS…QESC), 392-453 (AAGG…MPVS), 465-785 (LVGL…PQGE), 825-964 (SSEK…VSPP), 985-1050 (CTGQ…QPDS), 1062-1154 (ALAP…GEAT), 1243-1274 (AAQR…VGEP), 1296-1400 (QPGA…EQIA), 1427-1463 (PGEK…VTLL), 1493-1661 (ASDK…GERR), 1675-1705 (LGNQ…AGEA), 1741-1878 (VLPG…ESPT), 1907-2035 (HAGL…SSGT), and 2052-2460 (LEPR…ETPP). The span at 174-184 (GRERQPKEEGQ) shows a compositional bias: basic and acidic residues. 3 positions are modified to phosphoserine: Ser-197, Ser-201, and Ser-269. A Phosphothreonine modification is found at Val-325. Ser-493 is subject to Phosphoserine. Over residues 496–507 (ERGEHLNTEQSH) the composition is skewed to basic and acidic residues. A phosphoserine mark is found at Ser-561, Ser-571, and Ser-575. Residues 604-629 (SKRDPEVGKDELSKPSSDAESRDHPS) show a composition bias toward basic and acidic residues. Position 758 is a phosphoserine (Ser-758). Positions 911 to 926 (SDTPTSSPTDMVWESS) are enriched in low complexity. Phosphoserine is present on Ser-962. The span at 985–996 (CTGQGPNKSQQA) shows a compositional bias: polar residues. Phosphoserine is present on Ser-1025. Residues Ser-1267 and Ser-1313 each carry the phosphoserine modification. Residues 1348 to 1357 (ATAPGAGAKA) are compositionally biased toward low complexity. A compositionally biased stretch (polar residues) spans 1383-1400 (DPKQGTSGGVDTSSEQIA). Ser-1562 is modified (phosphoserine). 2 stretches are compositionally biased toward basic and acidic residues: residues 1801–1823 (DETH…RESP) and 1834–1854 (PKKD…RGAE). The span at 1862–1873 (ADDIIQPAAPAD) shows a compositional bias: low complexity. The span at 1939 to 1948 (PAKDLSRSSD) shows a compositional bias: basic and acidic residues. Positions 1963–1976 (KAPPAPPPPPPEVI) are enriched in pro residues. Ser-2072 carries the phosphoserine modification. The span at 2074–2102 (DSVPISKSTLSRSLSLQASDFDGASSSGN) shows a compositional bias: polar residues. Positions 2114 to 2124 (STGSSSASSTL) are enriched in low complexity. Positions 2125–2141 (KRTKKPRPPSLKKKQTT) are enriched in basic residues. Phosphoserine is present on residues Ser-2161 and Ser-2226. Position 2246 is a phosphothreonine (Thr-2246). A Phosphoserine modification is found at Ser-2256. A compositionally biased stretch (basic and acidic residues) spans 2265–2275 (LEFDYSEDKSS). Residues 2288–2305 (KIGKKPVAKMPLRRPKMK) are compositionally biased toward basic residues. Residues 2315–2403 (PASPPRSPAE…SPASFEIPAS (89 aa)) enclose the SPAZ domain. Phosphoserine occurs at positions 2317, 2321, 2359, 2389, 2392, 2394, and 2403. Polar residues predominate over residues 2348–2368 (NPFSSTSKMQESPKLPQQSYN). Residues 2382-2395 (KTSSKTPSSPSKSP) show a composition bias toward low complexity. Phosphothreonine occurs at positions 2430, 2451, 2455, and 2458. Residues Ser-2512 and Ser-2534 each carry the phosphoserine modification. Thr-2553 carries the phosphothreonine modification. Residues 2555–2577 (QESPVKSSPVRMSESPTPCSGSS) form a disordered region. 2 positions are modified to phosphoserine: Ser-2557 and Ser-2569. The span at 2568–2577 (ESPTPCSGSS) shows a compositional bias: polar residues. Thr-2625 carries the post-translational modification Phosphothreonine. 2 coiled-coil regions span residues 2675–2703 (AQKL…LASR) and 2746–2947 (DLDS…KMGK).

It belongs to the TACC family. In terms of assembly, interacts with CCDC100/CEP120. Interacts with microtubules. Interacts with YEATS4, GCN5L2 and PCAF. In terms of processing, phosphorylated by TTK; which is required for localization in centrosome. As to expression, strongly expressed in heart, skeletal muscle, brain, prostate, thyroid and trachea.

The protein resides in the cytoplasm. It is found in the nucleus. Its subcellular location is the cytoskeleton. It localises to the microtubule organizing center. The protein localises to the centrosome. Its function is as follows. Plays a role in the microtubule-dependent coupling of the nucleus and the centrosome. Involved in the processes that regulate centrosome-mediated interkinetic nuclear migration (INM) of neural progenitors. May play a role in organizing centrosomal microtubules. May act as a tumor suppressor protein. May represent a tumor progression marker. This chain is Transforming acidic coiled-coil-containing protein 2 (TACC2), found in Homo sapiens (Human).